Here is a 517-residue protein sequence, read N- to C-terminus: Endoglucanase A (517 aa).

The N-terminal stretch at 1-25 (MKRSLLKTCSIIAGATIIFSSLSIS) is a signal peptide. Glu-185 serves as the catalytic Proton donor. Glu-309 (nucleophile) is an active-site residue. Residues 382–392 (HPEATEDDKPS) show a composition bias toward basic and acidic residues. Positions 382–424 (HPEATEDDKPSTDVTNPDSGNTKPDSGNTNPGTETTTPTDNEK) are disordered. Over residues 393 to 407 (TDVTNPDSGNTKPDS) the composition is skewed to polar residues. A compositionally biased stretch (low complexity) spans 408-420 (GNTNPGTETTTPT). The CBM2 domain occupies 416–517 (TTTPTDNEKI…VISNFEYKFD (102 aa)).

It belongs to the glycosyl hydrolase 5 (cellulase A) family.

It catalyses the reaction Endohydrolysis of (1-&gt;4)-beta-D-glucosidic linkages in cellulose, lichenin and cereal beta-D-glucans.. In terms of biological role, hydrolyzes barley beta-glucan, lichenan, carboxymethylcellulose and xylan. It shows preferential activity against the larger cellooligosaccharides (cellohexaose and cellopentaose); cellotetraose is the smallest substrate degraded completely. The sequence is that of Endoglucanase A (celA) from Clostridium longisporum.